Consider the following 404-residue polypeptide: Cysteine desulfurase IscS (404 aa).

Pyridoxal 5'-phosphate-binding positions include 75-76, N155, Q183, and 203-205; these read AT and SAH. K206 carries the N6-(pyridoxal phosphate)lysine modification. T243 is a binding site for pyridoxal 5'-phosphate. C328 serves as the catalytic Cysteine persulfide intermediate. C328 contributes to the [2Fe-2S] cluster binding site.

It belongs to the class-V pyridoxal-phosphate-dependent aminotransferase family. NifS/IscS subfamily. Homodimer. Forms a heterotetramer with IscU, interacts with other sulfur acceptors. Requires pyridoxal 5'-phosphate as cofactor.

It localises to the cytoplasm. It catalyses the reaction (sulfur carrier)-H + L-cysteine = (sulfur carrier)-SH + L-alanine. The protein operates within cofactor biosynthesis; iron-sulfur cluster biosynthesis. Master enzyme that delivers sulfur to a number of partners involved in Fe-S cluster assembly, tRNA modification or cofactor biosynthesis. Catalyzes the removal of elemental sulfur atoms from cysteine to produce alanine. Functions as a sulfur delivery protein for Fe-S cluster synthesis onto IscU, an Fe-S scaffold assembly protein, as well as other S acceptor proteins. The polypeptide is Cysteine desulfurase IscS (Aeromonas salmonicida (strain A449)).